The sequence spans 588 residues: Arginine--tRNA ligase (588 aa).

The short motif at 124 to 134 (PNVAKPMHVGH) is the 'HIGH' region element.

This sequence belongs to the class-I aminoacyl-tRNA synthetase family. As to quaternary structure, monomer.

The protein resides in the cytoplasm. It catalyses the reaction tRNA(Arg) + L-arginine + ATP = L-arginyl-tRNA(Arg) + AMP + diphosphate. The polypeptide is Arginine--tRNA ligase (Maricaulis maris (strain MCS10) (Caulobacter maris)).